We begin with the raw amino-acid sequence, 95 residues long: Phosphoribosyl-ATP pyrophosphatase (95 aa).

Belongs to the PRA-PH family.

It localises to the cytoplasm. It catalyses the reaction 1-(5-phospho-beta-D-ribosyl)-ATP + H2O = 1-(5-phospho-beta-D-ribosyl)-5'-AMP + diphosphate + H(+). The protein operates within amino-acid biosynthesis; L-histidine biosynthesis; L-histidine from 5-phospho-alpha-D-ribose 1-diphosphate: step 2/9. This is Phosphoribosyl-ATP pyrophosphatase from Halobacterium salinarum (strain ATCC 29341 / DSM 671 / R1).